A 590-amino-acid polypeptide reads, in one-letter code: FAD-linked oxidoreductase malF (590 aa).

An N-terminal signal peptide occupies residues Met-1–Thr-18. N-linked (GlcNAc...) asparagine glycans are attached at residues Asn-44, Asn-80, Asn-103, Asn-178, and Asn-396. Positions Ala-117–Asp-303 constitute an FAD-binding PCMH-type domain.

Belongs to the oxygen-dependent FAD-linked oxidoreductase family. Requires FAD as cofactor.

Its function is as follows. FAD-linked oxidoreductase; part of the gene cluster that mediates the biosynthesis of malbrancheamide, a dichlorinated fungal indole alkaloid that belongs to a family of natural products containing a characteristic bicyclo[2.2.2]diazaoctane core. The first step of malbrancheamide biosynthesis involves coupling of L-proline and L-tryptophan by malG, a bimodular NRPS, to produce L-Pro-L-Trp aldehyde through reductive offloading. This compound undergoes spontaneous cyclization and dehydration to give a dienamine which is reverse prenylated at C-2 by malE. The other prenyltransferase present in the cluster, malB, displays modest activity, suggesting that may be a redundant gene in the pathway. Subsequently, a [4+2] Diels-Alder cyclo-addition catalyzed by the bifunctional enzyme malC forms the characteristic bicyclo[2.2.2]diazaoctane ring of premalbrancheamid. Finally, the flavin-dependent halogenase malA catalyzes the iterative dichlorination of the indole ring of premalbrancheamide to yield C-9 monochlorinated malbrancheamide B, C-8 monochlorinated isomalbrancheamide B, and dichlorinated malbrancheamide. MalA is also able to brominate premalbrancheamide at C-9 to yield malbrancheamide C, and, to a lesser extend, at C-8 to yield isomalbrancheamide C. Finally, malA can brominate C-9 monochlorinated malbrancheamide B at C-8 to yield malbrancheamide D, or C-8 monochlorinated isomalbrancheamide B at C-9 to produce isomalbrancheamide D. The polypeptide is FAD-linked oxidoreductase malF (Malbranchea aurantiaca).